Reading from the N-terminus, the 862-residue chain is Cadherin-related family member 5 (862 aa).

An N-terminal signal peptide occupies residues 1–28 (MGAPALLWPPLLLPLLTVLFGHLPGTLA). Topologically, residues 29–671 (QAQVCSANQT…GQRFSTVDMA (643 aa)) are extracellular. Residues Asn36, Asn45, Asn135, Asn173, Asn201, Asn311, Asn408, Asn438, and Asn479 are each glycosylated (N-linked (GlcNAc...) asparagine). Cadherin domains are found at residues 40 to 127 (FTMN…APEF), 128 to 240 (PFTI…TPWF), 252 to 357 (IQAQ…PLQF), and 358 to 462 (SQSL…PPST). A disordered region spans residues 452-658 (IQVSEREPPS…TTGPISGVGE (207 aa)). Over residues 461-500 (STESPTPPEAGGTTGPSSNTTLETPSTSGTSQGPATTSSG) the composition is skewed to low complexity. Residues 529–652 (LGISTSPQTA…GTSQPTTTGP (124 aa)) are compositionally biased toward polar residues. Repeat copies occupy residues 545–575 (TQTPKPGTSQPMVPTPGASTSSQPATPSGSS), 576–606 (TQTPKPGTSQPMVPTPGASTSSQPATPSGSS), and 607–636 (TQTPRPGTSQPMVPTPGASTSSQPATPSGS). Positions 545–648 (TQTPKPGTSQ…TPKPGTSQPT (104 aa)) are 4 X 31 AA approximate tandem repeats. The 4; truncated repeat unit spans residues 637–648 (TQTPKPGTSQPT). A helical membrane pass occupies residues 672–692 (VLGGVLGALLLLALIFLIILI). Residues 693–862 (HKHYRHRFTC…LGAVADNTYV (170 aa)) lie on the Cytoplasmic side of the membrane. The tract at residues 693 to 862 (HKHYRHRFTC…LGAVADNTYV (170 aa)) is mediates interaction with USH1C and MYO7B and is required for proper localization to microvilli tips and function in microvilli organization. 2 disordered regions span residues 706–803 (KAKE…EGGY) and 821–862 (LNEP…NTYV). Phosphoserine occurs at positions 729, 751, and 755. Positions 739–768 (GPEPVQPPLRPPSPMSSSPTPPSSMPPSPQ) are enriched in pro residues. The residue at position 758 (Thr758) is a Phosphothreonine. Ser766 and Ser783 each carry phosphoserine. Basic and acidic residues predominate over residues 791 to 801 (LTKERRPEGEG). Thr825 bears the Phosphothreonine mark. Low complexity predominate over residues 827-837 (DVDSASASGSE). 3 positions are modified to phosphoserine: Ser832, Ser834, and Ser836.

In terms of assembly, part of the IMAC/intermicrovillar adhesion complex/intermicrovillar tip-link complex composed of ANKS4B, MYO7B, USH1C, CDHR2 and CDHR5. Interacts (via cytoplasmic domain) with USH1C and MYO7B; required for proper localization of CDHR5 to microvilli tips and its function in brush border differentiation. In terms of processing, N- and O-glycosylated. As to expression, expressed predominantly in kidney. Also detected in lung and small intestine.

The protein resides in the apical cell membrane. It is found in the cell projection. Its subcellular location is the microvillus membrane. Intermicrovillar adhesion molecule that forms, via its extracellular domain, calcium-dependent heterophilic complexes with CDHR2 on adjacent microvilli. Thereby, controls the packing of microvilli at the apical membrane of epithelial cells. Through its cytoplasmic domain, interacts with microvillus cytoplasmic proteins to form the intermicrovillar adhesion complex/IMAC. This complex plays a central role in microvilli and epithelial brush border differentiation. This is Cadherin-related family member 5 from Rattus norvegicus (Rat).